A 193-amino-acid polypeptide reads, in one-letter code: Peptidyl-tRNA hydrolase (193 aa).

Tyr21 is a tRNA binding site. His26 serves as the catalytic Proton acceptor. TRNA contacts are provided by Tyr72, Asn74, and Asn120.

The protein belongs to the PTH family. In terms of assembly, monomer.

The protein localises to the cytoplasm. The enzyme catalyses an N-acyl-L-alpha-aminoacyl-tRNA + H2O = an N-acyl-L-amino acid + a tRNA + H(+). Hydrolyzes ribosome-free peptidyl-tRNAs (with 1 or more amino acids incorporated), which drop off the ribosome during protein synthesis, or as a result of ribosome stalling. Its function is as follows. Catalyzes the release of premature peptidyl moieties from peptidyl-tRNA molecules trapped in stalled 50S ribosomal subunits, and thus maintains levels of free tRNAs and 50S ribosomes. The polypeptide is Peptidyl-tRNA hydrolase (Nocardia farcinica (strain IFM 10152)).